The chain runs to 439 residues: Homeobox protein ceh-32 (439 aa).

Positions 183-243 form a DNA-binding region, homeobox; sequence WDGEQKTHCF…KNRRQRDRAA (61 aa). 3 disordered regions span residues 253 to 293, 344 to 365, and 379 to 439; these read GVEL…SHIP, EEEN…KKRS, and VSPS…SQSE. Acidic residues-rich tracts occupy residues 264–274 and 344–358; these read SDSDDDFEDSM and EEEN…EADI. Residues 379–392 show a composition bias toward polar residues; that stretch reads VSPSQCSPCSNESL. Positions 398–428 are enriched in basic and acidic residues; the sequence is VKTEEVKKEDDEAAEEDSRSVKSETSEDPKH.

Belongs to the SIX/Sine oculis homeobox family. Interacts with gmn-1. Expressed in the posterior gonad. Expressed in some cells in the head that are probably neurons. Expressed in the dorsal and ventral neuron RMD pair and the inner labial neuron class IL1. Not expressed in BAG neurons.

Its subcellular location is the nucleus. Transcription factor which binds a motif with the core sequence 5'-GTATCA-3'. Plays a role in head morphogenesis. Involved in embryonic development. Required for cell specification of the RIA interneurons. May cooperate with the transcription factor vab-3 and phosphatase eya-1 to repress transcription factor ets-5 expression in non BAG neuronal cells. This Caenorhabditis elegans protein is Homeobox protein ceh-32.